We begin with the raw amino-acid sequence, 164 residues long: MEESKSSVASRLMSVKRTSGKSYGRIAEETGLTNVYVAQLLRRQAQLKADTAPKLQAALPELTDELLQEMMKPPLRSYDPHLIQEPTVYRLNEAVMHFGESIKEIINEEFGDGIMSAIDFYCSVDKVKGVDGKDRVVLTFDGKYLPHTEQKSEHMVSRLRLQGD.

Active-site residues include Arg90, Glu93, and Ser116.

The protein belongs to the cyanase family.

It catalyses the reaction cyanate + hydrogencarbonate + 3 H(+) = NH4(+) + 2 CO2. Functionally, catalyzes the reaction of cyanate with bicarbonate to produce ammonia and carbon dioxide. This Vitis vinifera (Grape) protein is Cyanate hydratase.